The sequence spans 546 residues: Chaperonin GroEL 2 (546 aa).

ATP contacts are provided by residues 29 to 32 (TLGP), 86 to 90 (DGTTT), Gly-418, 482 to 484 (NAA), and Asp-498.

It belongs to the chaperonin (HSP60) family. In terms of assembly, forms a cylinder of 14 subunits composed of two heptameric rings stacked back-to-back. Interacts with the co-chaperonin GroES.

The protein resides in the cytoplasm. It catalyses the reaction ATP + H2O + a folded polypeptide = ADP + phosphate + an unfolded polypeptide.. In terms of biological role, together with its co-chaperonin GroES, plays an essential role in assisting protein folding. The GroEL-GroES system forms a nano-cage that allows encapsulation of the non-native substrate proteins and provides a physical environment optimized to promote and accelerate protein folding. The protein is Chaperonin GroEL 2 of Corynebacterium diphtheriae (strain ATCC 700971 / NCTC 13129 / Biotype gravis).